A 190-amino-acid chain; its full sequence is GTP cyclohydrolase 1 (190 aa).

Residues Cys-75, His-78, and Cys-146 each contribute to the Zn(2+) site.

It belongs to the GTP cyclohydrolase I family. As to quaternary structure, toroid-shaped homodecamer, composed of two pentamers of five dimers.

The enzyme catalyses GTP + H2O = 7,8-dihydroneopterin 3'-triphosphate + formate + H(+). Its pathway is cofactor biosynthesis; 7,8-dihydroneopterin triphosphate biosynthesis; 7,8-dihydroneopterin triphosphate from GTP: step 1/1. In Campylobacter jejuni (strain RM1221), this protein is GTP cyclohydrolase 1.